A 389-amino-acid chain; its full sequence is Probable serine/threonine-protein kinase PBL24 (389 aa).

The segment at 1-36 (MSCFLGPSTNNKSRENEGSSMAAPYEQQNLPRNDRR) is disordered. Cys-3 carries S-palmitoyl cysteine lipidation. The Protein kinase domain occupies 71–348 (FRQEFLIGEG…SDVVTALSFM (278 aa)). ATP-binding positions include 77 to 85 (IGEGGFGRV) and Lys-100. The active-site Proton acceptor is the Asp-198. Phosphoserine occurs at positions 202 and 232. At Thr-238 the chain carries Phosphothreonine. Tyr-246 carries the post-translational modification Phosphotyrosine.

Belongs to the protein kinase superfamily. Ser/Thr protein kinase family.

The protein localises to the cell membrane. The catalysed reaction is L-seryl-[protein] + ATP = O-phospho-L-seryl-[protein] + ADP + H(+). It catalyses the reaction L-threonyl-[protein] + ATP = O-phospho-L-threonyl-[protein] + ADP + H(+). May be involved in plant defense signaling. The chain is Probable serine/threonine-protein kinase PBL24 from Arabidopsis thaliana (Mouse-ear cress).